The sequence spans 359 residues: Non-classical arabinogalactan protein 31 (359 aa).

The signal sequence occupies residues 1 to 24 (MGFIGKSVLVSLVALWCFTSSVFT). The disordered stretch occupies residues 31 to 215 (TQTPSLAPAP…PPVSPPTKPP (185 aa)). The segment covering 44–66 (HHGHHHPHPPHHHHPHPHPHPHP) has biased composition (basic residues). Residues 67–215 (PAKSPVKPPV…PPVSPPTKPP (149 aa)) are compositionally biased toward pro residues. 4-hydroxyproline is present on residues Pro71, Pro75, Pro79, Pro82, Pro83, Pro87, Pro91, Pro95, Pro99, Pro103, Pro107, Pro111, Pro114, Pro115, Pro119, Pro123, Pro127, Pro131, Pro135, Pro139, Pro143, Pro147, Pro151, Pro155, Pro159, Pro163, Pro167, Pro171, Pro175, Pro179, Pro183, Pro186, Pro187, Pro191, Pro195, Pro199, Pro203, Pro207, Pro210, Pro211, Pro215, and Pro219. O-linked (Ara...) hydroxyproline glycosylation is found at Pro71, Pro75, Pro79, Pro82, Pro83, Pro87, Pro91, Pro95, Pro99, Pro103, Pro107, Pro111, Pro114, Pro115, Pro119, Pro123, Pro127, Pro131, Pro135, Pro139, Pro143, Pro147, Pro151, Pro155, Pro159, Pro163, Pro167, Pro171, Pro175, Pro179, Pro183, Pro186, Pro187, Pro191, Pro195, Pro199, Pro203, Pro207, Pro210, Pro211, Pro215, and Pro219. Copy 1 of the repeat occupies 90-109 (PPVYPPTKAPVKPPTKPPVK). A run of 3 repeats spans residues 122-141 (PPVYPPTKAPVKPPTKPPVK), 142-161 (PPVYPPTKAPVKPPTKPPVK), and 162-181 (PPVYPPTKAPVKPPTKPPVK). N-linked (GlcNAc...) asparagine glycans are attached at residues Asn226 and Asn269.

This sequence belongs to the non-classical AGP family. Post-translationally, hydroxylated on numerous prolines in the proline-rich region. O-glycosylated on numerous hydroxyprolines in the proline-rich region; noncontiguous hydroxylproline residues are glycosylated with arabinogalactan. In terms of tissue distribution, expressed in vascular bundles of roots, leaves, sepals and stamen filaments, and pistils but not stigma.

The protein localises to the secreted. Its subcellular location is the cell wall. Functionally, proteoglycan that may contribute to the strengthening of cell walls. In Arabidopsis thaliana (Mouse-ear cress), this protein is Non-classical arabinogalactan protein 31.